Here is a 366-residue protein sequence, read N- to C-terminus: Phenylalanine dehydrogenase (366 aa).

R45 contributes to the NAD(+) binding site. K69 provides a ligand contact to L-phenylalanine. The active site involves K81. NAD(+) is bound by residues D116, T151, G181–E187, D204–I205, A241–K242, and S262–N264. N264 is an L-phenylalanine binding site.

The protein belongs to the Glu/Leu/Phe/Val dehydrogenases family.

It catalyses the reaction L-phenylalanine + NAD(+) + H2O = 3-phenylpyruvate + NH4(+) + NADH + H(+). It functions in the pathway amino-acid biosynthesis; L-phenylalanine biosynthesis; L-phenylalanine from phenylpyruvate (PDH route): step 1/1. Catalyzes the reversible NAD(+)-dependent oxidative deamination of L-phenylalanine to phenylpyruvate. This Thermoactinomyces intermedius protein is Phenylalanine dehydrogenase.